We begin with the raw amino-acid sequence, 75 residues long: Anionic peptide (75 aa).

Positions 1–24 (MVSKSLIVLLLVSVLVSTFYTSEA) are cleaved as a signal peptide.

It belongs to the non-disulfide-bridged peptide (NDBP) superfamily. Expressed by the venom gland.

The protein resides in the secreted. The polypeptide is Anionic peptide (Tityus discrepans (Venezuelan scorpion)).